Reading from the N-terminus, the 218-residue chain is Protein-L-isoaspartate O-methyltransferase 1 (218 aa).

Ser-69 is a catalytic residue.

The protein belongs to the methyltransferase superfamily. L-isoaspartyl/D-aspartyl protein methyltransferase family.

Its subcellular location is the cytoplasm. It catalyses the reaction [protein]-L-isoaspartate + S-adenosyl-L-methionine = [protein]-L-isoaspartate alpha-methyl ester + S-adenosyl-L-homocysteine. Functionally, catalyzes the methyl esterification of L-isoaspartyl residues in peptides and proteins that result from spontaneous decomposition of normal L-aspartyl and L-asparaginyl residues. It plays a role in the repair and/or degradation of damaged proteins. In Marinobacter nauticus (strain ATCC 700491 / DSM 11845 / VT8) (Marinobacter aquaeolei), this protein is Protein-L-isoaspartate O-methyltransferase 1.